The primary structure comprises 1275 residues: MAPSEFQPSLWESVTSLIRSAQEKNVDPLHWALQLRLTLASAGISLPSPDLAQFLVTHIFWENHSPLSWKLLEKAISVNIVPPLLVLALLSPRVIPNRKLHPAAYRLYMELLKRHAFSFMPLIRAPGYHKTMNSIDDILHLSETFGVQDQEPGSILLAFVFSIVWELLDASLDEEGLLELTSNKRSKWPSSPHDMDLDGLENSVKRNENHDALEKANTEMAIELIQEFLQNKVTSRILHLASQNMESKTIPRGEFHAIVSSGSKLALTSDSALWLPIDLFFEDIMDGTQAAAASAVENLTGLVKALQAANSTSWHDAFLALWLAALRLVQRENLCLRYCFFMHMLEILSEERDPIEGPVPRTDTFLCVLLSVTPLAVANIIEEEESQWIDQTSSSPSNQWKEKKGKCRQGLINSLQQLGDYESLLTPPRSVQSVANQAAAKAIMFISGITNSNGSYENTSMSESASGCCKVRFSLFTLKMFVVMGVYLLCNISCWSLVMKGSPLTPSLTNSLITTPASSLAEIEKMYEVATTGSEDEKIAVASILCGASLFRGWSIQEHVIIFIVTLLSPPAPADLSGSYSHLINSAPFLNVLLVGISPIDCVHIFSLHGVVPLLAGALMPICEAFGSGVPNITWTLPTGELISSHAVFSTAFTLLLRLWRFDHPPLDYVLGDVPPVGPQPSPEYLLLVRNCRLECFGKSPKDRMARRRFSKVIDISVDPIFMDSFPRLKQWYRQHQECMASILSELKTGSPVHHIVDSLLSMMFKKANKGGSQSLTPSSGSSSLSTSGGDDSSDQLKLPAWDILEAAPFVLDAALTACAHGSLSPRELATGLKILADFLPATLGTMVSYFSSEVTRGLWKPVSMNGTDWPSPAANLASVEQQIEKILAATGVDVPRLPADGISAATLPLPLAALVSLTITYKLDKATERFLVLVGPALDSLAAACPWPCMPIVTSLWTQKVKRWSDFLIFSASRTVFHHNRDAVIQLLRSCFTCTLGLTPTSQLCSYGGVGALLGHGFGSRYSGGISTAAPGILYIKVHRSIRDVMFLTEEILSLLMFSVKSIATRELPAGQAEKLKKTKDGSRYGIGQVSLSLAMRRVKLAASLGASLVWISGGLNLVQALIKETLPSWFISVHGEEDELGGMVPMLRGYALAYFAILSSAFAWGVDSSYPASKRRPRVLWLHLEFMVSALEGKISLGCDWATWQAYVTGFVSLMVQCTPAWVLEVDVEVIKRLSKSLRQWNEQDLALALLCAGGLGTMGAATELIVETCHQH.

Over residues 772–791 the composition is skewed to low complexity; that stretch reads GSQSLTPSSGSSSLSTSGGD. Residues 772–792 form a disordered region; that stretch reads GSQSLTPSSGSSSLSTSGGDD.

This sequence belongs to the Mediator complex subunit 33 family. In terms of assembly, component of the Mediator complex. As to expression, ubiquitous.

The protein localises to the nucleus. Its function is as follows. Component of the Mediator complex, a coactivator involved in the regulated transcription of nearly all RNA polymerase II-dependent genes. Mediator functions as a bridge to convey information from gene-specific regulatory proteins to the basal RNA polymerase II transcription machinery. The Mediator complex, having a compact conformation in its free form, is recruited to promoters by direct interactions with regulatory proteins and serves for the assembly of a functional preinitiation complex with RNA polymerase II and the general transcription factors. Involved in the repression of phenylpropanoid biosynthesis. May compete with MED33B for common binding partners or for occupancy in Mediator. The polypeptide is Mediator of RNA polymerase II transcription subunit 33B (MED33B) (Arabidopsis thaliana (Mouse-ear cress)).